The following is a 45-amino-acid chain: uncharacterized protein (45 aa).

The chain crosses the membrane as a helical span at residues 5 to 25 (IFFIFALSGILAACTVGGGVS).

It localises to the membrane. This is an uncharacterized protein from Haemophilus influenzae (strain ATCC 51907 / DSM 11121 / KW20 / Rd).